A 31-amino-acid chain; its full sequence is Cyclotide mden-N (31 aa).

A cross-link (cyclopeptide (Gly-Asn)) is located at residues 1–31 (GTIPCGESCVYIPCLTSALGCSCKNKVCYRN). Disulfide bonds link C5–C21, C9–C23, and C14–C28.

It belongs to the cyclotide family. Bracelet subfamily. Post-translationally, this is a cyclic peptide.

Functionally, probably participates in a plant defense mechanism. In Melicytus dentatus (Tree violet), this protein is Cyclotide mden-N.